Reading from the N-terminus, the 720-residue chain is Zinc finger protein 408 (720 aa).

Residues Val201–Gly350 are disordered. Residues Leu275 to Pro285 are compositionally biased toward polar residues. Positions Gly287 to Ala296 are enriched in low complexity. The residue at position 322 (Thr322) is a Phosphothreonine. 10 consecutive C2H2-type zinc fingers follow at residues Tyr353–His375, Phe381–His403, Phe409–His431, Phe437–His459, Cys468–His490, Phe496–His518, Tyr524–His546, His551–His573, Phe579–His601, and Tyr607–His629.

Highest expression is observed in adult retina; abundantly expressed in the fetal eye. In the retina, it is detected in the outer nuclear layer, especially cone and rod photoreceptor cells, ganglion cell layer and both outer and inner plexiform layers (at protein level). Expressed in retinal blood vessels (at protein level).

It is found in the nucleus. In terms of biological role, may be involved in transcriptional regulation. This chain is Zinc finger protein 408 (ZNF408), found in Homo sapiens (Human).